The following is a 388-amino-acid chain: Succinate--CoA ligase [ADP-forming] subunit beta (388 aa).

The ATP-grasp domain maps to 9 to 246 (KDILRQFGVP…FEEEDPAEVL (238 aa)). ATP-binding positions include lysine 46, 53–55 (GRG), glutamate 99, alanine 102, and glutamate 107. Residues asparagine 201 and aspartate 215 each coordinate Mg(2+). Substrate is bound by residues asparagine 266 and 323–325 (GIM).

The protein belongs to the succinate/malate CoA ligase beta subunit family. Heterotetramer of two alpha and two beta subunits. Mg(2+) serves as cofactor.

The enzyme catalyses succinate + ATP + CoA = succinyl-CoA + ADP + phosphate. It carries out the reaction GTP + succinate + CoA = succinyl-CoA + GDP + phosphate. It participates in carbohydrate metabolism; tricarboxylic acid cycle; succinate from succinyl-CoA (ligase route): step 1/1. Its function is as follows. Succinyl-CoA synthetase functions in the citric acid cycle (TCA), coupling the hydrolysis of succinyl-CoA to the synthesis of either ATP or GTP and thus represents the only step of substrate-level phosphorylation in the TCA. The beta subunit provides nucleotide specificity of the enzyme and binds the substrate succinate, while the binding sites for coenzyme A and phosphate are found in the alpha subunit. The chain is Succinate--CoA ligase [ADP-forming] subunit beta from Verminephrobacter eiseniae (strain EF01-2).